A 103-amino-acid polypeptide reads, in one-letter code: uncharacterized protein (103 aa).

Residues 38-58 (FTTLITIYVAAFYTGVIGAAV) form a helical membrane-spanning segment.

The protein localises to the membrane. This is an uncharacterized protein from Arabidopsis thaliana (Mouse-ear cress).